The sequence spans 334 residues: ATP-dependent kinase YFH7 (334 aa).

30 to 38 (GHPGSGKST) is a binding site for ATP.

It belongs to the YFH7 family.

ATP-dependent kinase that could be involved in endoplasmic reticulum membrane assembly. This Eremothecium gossypii (strain ATCC 10895 / CBS 109.51 / FGSC 9923 / NRRL Y-1056) (Yeast) protein is ATP-dependent kinase YFH7 (YFH7).